The chain runs to 362 residues: 3-dehydroquinate synthase (362 aa).

NAD(+) is bound by residues 71–76 (DGEQYK), 105–109 (GVVGD), 129–130 (TT), lysine 142, lysine 151, and 169–172 (CLKT). Residues glutamate 184, histidine 247, and histidine 264 each coordinate Zn(2+).

It belongs to the sugar phosphate cyclases superfamily. Dehydroquinate synthase family. It depends on Co(2+) as a cofactor. Zn(2+) serves as cofactor. The cofactor is NAD(+).

The protein resides in the cytoplasm. The enzyme catalyses 7-phospho-2-dehydro-3-deoxy-D-arabino-heptonate = 3-dehydroquinate + phosphate. It functions in the pathway metabolic intermediate biosynthesis; chorismate biosynthesis; chorismate from D-erythrose 4-phosphate and phosphoenolpyruvate: step 2/7. Functionally, catalyzes the conversion of 3-deoxy-D-arabino-heptulosonate 7-phosphate (DAHP) to dehydroquinate (DHQ). In Shigella flexneri serotype 5b (strain 8401), this protein is 3-dehydroquinate synthase.